We begin with the raw amino-acid sequence, 79 residues long: Conotoxin VnMKLT1-01122 (79 aa).

An N-terminal signal peptide occupies residues 1 to 22; that stretch reads MKLTCMKIVAVLFLTAWTFVTA. A propeptide spanning residues 23 to 48 is cleaved from the precursor; sequence DDSRNGLEYLFPKAHYEMNPEASKLN. Gln51 carries the pyrrolidone carboxylic acid modification. Intrachain disulfides connect Cys53-Cys70, Cys60-Cys74, and Cys69-Cys78.

Belongs to the conotoxin O1 superfamily. As to expression, expressed by the venom duct.

It localises to the secreted. The polypeptide is Conotoxin VnMKLT1-01122 (Conus ventricosus (Mediterranean cone)).